A 229-amino-acid polypeptide reads, in one-letter code: Flagellar L-ring protein (229 aa).

The first 25 residues, 1–25 (MKQVRLPSSATVRAACAVAVAALAG), serve as a signal peptide directing secretion. Cys-26 carries the N-palmitoyl cysteine lipid modification. Cys-26 carries S-diacylglycerol cysteine lipidation.

Belongs to the FlgH family. As to quaternary structure, the basal body constitutes a major portion of the flagellar organelle and consists of four rings (L,P,S, and M) mounted on a central rod.

It localises to the cell outer membrane. It is found in the bacterial flagellum basal body. In terms of biological role, assembles around the rod to form the L-ring and probably protects the motor/basal body from shearing forces during rotation. The sequence is that of Flagellar L-ring protein from Burkholderia cenocepacia (strain ATCC BAA-245 / DSM 16553 / LMG 16656 / NCTC 13227 / J2315 / CF5610) (Burkholderia cepacia (strain J2315)).